Here is a 179-residue protein sequence, read N- to C-terminus: MINKNKWLTVGLITSCHGINGQVKVKSLSDFEERFLKPGMRWLQKEDEPPSKIELISGFKQPGKQTFVIKLKDINSRNHAEQLKKFKILVKTNEIPKLKKEEFHLLELINLKVNTLENDKLNTIGKVINLENEKNNLLVIKLFKNQKEVFIPFVKEIVPIVDIKNNFIIINPPNGLLEL.

Residues 100 to 176 (KEEFHLLELI…FIIINPPNGL (77 aa)) form the PRC barrel domain.

Belongs to the RimM family. Binds ribosomal protein uS19.

Its subcellular location is the cytoplasm. Its function is as follows. An accessory protein needed during the final step in the assembly of 30S ribosomal subunit, possibly for assembly of the head region. Essential for efficient processing of 16S rRNA. May be needed both before and after RbfA during the maturation of 16S rRNA. It has affinity for free ribosomal 30S subunits but not for 70S ribosomes. The protein is Ribosome maturation factor RimM of Prochlorococcus marinus (strain MIT 9215).